The sequence spans 86 residues: Small ribosomal subunit protein uS17 (86 aa).

The protein belongs to the universal ribosomal protein uS17 family. In terms of assembly, part of the 30S ribosomal subunit.

In terms of biological role, one of the primary rRNA binding proteins, it binds specifically to the 5'-end of 16S ribosomal RNA. The chain is Small ribosomal subunit protein uS17 from Marinomonas sp. (strain MWYL1).